The sequence spans 293 residues: Membrane protein RL13 (293 aa).

An N-terminal signal peptide occupies residues M1–C19. A helical membrane pass occupies residues I245–L265.

The protein localises to the virion membrane. In terms of biological role, may play a role in modifying tropism or in modulating cell signaling during virus entry. Since RL13 expression severely impairs HCMV replication in epithelial cell cultures, it may act as a regulator promoting persistence by suppressing the switch to fully lytic infection. This chain is Membrane protein RL13 (RL13), found in Human cytomegalovirus (strain Merlin) (HHV-5).